The sequence spans 205 residues: ESCRT-related protein CHMP1 (205 aa).

Coiled-coil stretches lie at residues 13 to 51 and 109 to 140; these read DLKF…MDGA and GNLQ…GAMA.

Belongs to the SNF7 family.

It localises to the cytoplasm. It is found in the endosome membrane. Involved in ESCRT-dependent multivesicular body (MVB) formation and sorting of endosomal cargo proteins into MVBs. The polypeptide is ESCRT-related protein CHMP1 (Oryza sativa subsp. japonica (Rice)).